We begin with the raw amino-acid sequence, 360 residues long: Photosystem II protein D1 (360 aa).

Helical transmembrane passes span 29–46 (YVGW…TATT), 118–133 (HFLL…QWEL), and 142–156 (WICV…AATA). His-118 is a chlorophyll a binding site. Residue Tyr-126 coordinates pheophytin a. Residues Asp-170 and Glu-189 each coordinate [CaMn4O5] cluster. Residues 197–218 (FHMLGVAGVFGGSLFSAMHGSL) traverse the membrane as a helical segment. His-198 contacts chlorophyll a. A quinone is bound by residues His-215 and 264 to 265 (SF). His-215 provides a ligand contact to Fe cation. Residue His-272 participates in Fe cation binding. A helical membrane pass occupies residues 274–288 (FLGAWPVIGIWFTAM). Residues His-332, Glu-333, Asp-342, and Ala-344 each coordinate [CaMn4O5] cluster. The propeptide occupies 345–360 (SGEQAPVALTAPAING).

Belongs to the reaction center PufL/M/PsbA/D family. As to quaternary structure, PSII is composed of 1 copy each of membrane proteins PsbA, PsbB, PsbC, PsbD, PsbE, PsbF, PsbH, PsbI, PsbJ, PsbK, PsbL, PsbM, PsbT, PsbX, PsbY, PsbZ, Psb30/Ycf12, peripheral proteins PsbO, CyanoQ (PsbQ), PsbU, PsbV and a large number of cofactors. It forms dimeric complexes. Requires The D1/D2 heterodimer binds P680, chlorophylls that are the primary electron donor of PSII, and subsequent electron acceptors. It shares a non-heme iron and each subunit binds pheophytin, quinone, additional chlorophylls, carotenoids and lipids. D1 provides most of the ligands for the Mn4-Ca-O5 cluster of the oxygen-evolving complex (OEC). There is also a Cl(-1) ion associated with D1 and D2, which is required for oxygen evolution. The PSII complex binds additional chlorophylls, carotenoids and specific lipids. as cofactor. In terms of processing, tyr-161 forms a radical intermediate that is referred to as redox-active TyrZ, YZ or Y-Z. C-terminally processed by CtpA; processing is essential to allow assembly of the oxygen-evolving complex and thus photosynthetic growth.

The protein localises to the cellular thylakoid membrane. It catalyses the reaction 2 a plastoquinone + 4 hnu + 2 H2O = 2 a plastoquinol + O2. Functionally, photosystem II (PSII) is a light-driven water:plastoquinone oxidoreductase that uses light energy to abstract electrons from H(2)O, generating O(2) and a proton gradient subsequently used for ATP formation. It consists of a core antenna complex that captures photons, and an electron transfer chain that converts photonic excitation into a charge separation. The D1/D2 (PsbA/PsbD) reaction center heterodimer binds P680, the primary electron donor of PSII as well as several subsequent electron acceptors. This Microcystis aeruginosa protein is Photosystem II protein D1.